We begin with the raw amino-acid sequence, 180 residues long: Large ribosomal subunit protein uL5 (180 aa).

The protein belongs to the universal ribosomal protein uL5 family. Part of the 50S ribosomal subunit; part of the 5S rRNA/L5/L18/L25 subcomplex. Contacts the 5S rRNA and the P site tRNA. Forms a bridge to the 30S subunit in the 70S ribosome.

In terms of biological role, this is one of the proteins that bind and probably mediate the attachment of the 5S RNA into the large ribosomal subunit, where it forms part of the central protuberance. In the 70S ribosome it contacts protein S13 of the 30S subunit (bridge B1b), connecting the 2 subunits; this bridge is implicated in subunit movement. Contacts the P site tRNA; the 5S rRNA and some of its associated proteins might help stabilize positioning of ribosome-bound tRNAs. The protein is Large ribosomal subunit protein uL5 of Spiroplasma kunkelii.